We begin with the raw amino-acid sequence, 431 residues long: Ribosomal RNA small subunit methyltransferase B (431 aa).

Residues 254 to 260 (CAAPGGK), Asp277, Asp303, and Asp322 contribute to the S-adenosyl-L-methionine site. Residue Cys375 is the Nucleophile of the active site.

It belongs to the class I-like SAM-binding methyltransferase superfamily. RsmB/NOP family.

The protein resides in the cytoplasm. The enzyme catalyses cytidine(967) in 16S rRNA + S-adenosyl-L-methionine = 5-methylcytidine(967) in 16S rRNA + S-adenosyl-L-homocysteine + H(+). Specifically methylates the cytosine at position 967 (m5C967) of 16S rRNA. In Klebsiella pneumoniae subsp. pneumoniae (strain ATCC 700721 / MGH 78578), this protein is Ribosomal RNA small subunit methyltransferase B.